The sequence spans 229 residues: Potassium/proton antiporter CemA (229 aa).

The next 2 helical transmembrane spans lie at 7–27 and 107–127; these read FTPLFYLASIVFLPWWISFSV and ILHFSTNIIWFGILSGYSILG.

It belongs to the CemA family.

The protein localises to the plastid. Its subcellular location is the chloroplast inner membrane. The catalysed reaction is K(+)(in) + H(+)(out) = K(+)(out) + H(+)(in). Its function is as follows. Contributes to K(+)/H(+) antiport activity by supporting proton efflux to control proton extrusion and homeostasis in chloroplasts in a light-dependent manner to modulate photosynthesis. Prevents excessive induction of non-photochemical quenching (NPQ) under continuous-light conditions. Indirectly promotes efficient inorganic carbon uptake into chloroplasts. The polypeptide is Potassium/proton antiporter CemA (Solanum tuberosum (Potato)).